The following is a 146-amino-acid chain: Large ribosomal subunit protein uL15 (146 aa).

Residues 1 to 10 (MKLHELKPAE) show a composition bias toward basic and acidic residues. The interval 1–51 (MKLHELKPAEGSRQVRNRVGRGTSSGNGKTAGRGQKGQKARSGGGVRLGFE) is disordered. Gly residues-rich tracts occupy residues 23–35 (TSSG…GRGQ) and 42–51 (SGGGVRLGFE).

Belongs to the universal ribosomal protein uL15 family. In terms of assembly, part of the 50S ribosomal subunit.

Its function is as follows. Binds to the 23S rRNA. The chain is Large ribosomal subunit protein uL15 from Enterococcus faecalis (strain ATCC 700802 / V583).